The following is a 333-amino-acid chain: Probable G-protein coupled receptor 33 (333 aa).

Residues 1-30 (MDLINSTDYLINASTLVRNSTQFLAPASKM) lie on the Extracellular side of the membrane. Asn-5, Asn-12, and Asn-19 each carry an N-linked (GlcNAc...) asparagine glycan. A helical membrane pass occupies residues 31 to 53 (IIALSLYISSIIGTITNGLYLWV). Topologically, residues 54–64 (LRFKMKQTVNT) are cytoplasmic. Residues 65–86 (LLFFHLILSYFISTMILPFMAT) traverse the membrane as a helical segment. Residues 87-103 (SQLQDNHWNFGTALCKV) are Extracellular-facing. A disulfide bond links Cys-101 and Cys-179. Residues 104-124 (FNGTLSLGMFTSVFFLSAIGL) traverse the membrane as a helical segment. At 125-143 (DRYLLTLHPVWSQQHRTPR) the chain is on the cytoplasmic side. Residues 144 to 165 (WASSIVLGVWISAAALSIPYLI) form a helical membrane-spanning segment. Residues 166-209 (FRETHHDRKGKVTCQNNYAVSTNWESKEMQASRQWIHVACFISR) are Extracellular-facing. Residues 210-230 (FLLGFLLPFFIIIFCYERVAS) traverse the membrane as a helical segment. The Cytoplasmic portion of the chain corresponds to 231-246 (KVKERSLFKSSKPFKV). The helical transmembrane segment at 247 to 268 (MMTAIISFFVCWMPYHIHQGLL) threads the bilayer. Residues 269 to 283 (LTTNQSLLLELTLIL) are Extracellular-facing. N-linked (GlcNAc...) asparagine glycosylation is present at Asn-272. Residues 284–303 (TVLTTSFNTIFSPTLYLFVG) form a helical membrane-spanning segment. Residues 304-333 (ENFKKVFKKSILALFESTFSEDSSVERTQT) are Cytoplasmic-facing.

It belongs to the G-protein coupled receptor 1 family. In terms of tissue distribution, expressed in spleen, lung, heart, liver, kidney, pancreas, thymus, gonads and leukocytes.

The protein localises to the cell membrane. Orphan receptor; could be a chemoattractant receptor. In Homo sapiens (Human), this protein is Probable G-protein coupled receptor 33 (GPR33).